A 279-amino-acid polypeptide reads, in one-letter code: MALKTFKPITPSLRQLVIVDRSNLYKGKPVKQLTEGKSSSGGRNNNGRVTVRFRGGGHKQTYRIIDFKRRKLDMPAKVERIEYDPNRTSFIALIRYADDELSYIIAPQKLAVGDEVISGQQVDVKPGNAMALANMPVGTIVHNIEMKIGKGAAMVRSAGTYAQVVGRDQGYVIVRLNSGEQRLIHGQCFATVGAVSNPDHMNASIGKAGRSRWLGRRPHNRGVTMNPVDHPHGGGEGRTSGGRHPVTPWGKPTKGKKTRTNKSTDKFIVTSRHKSKKKG.

2 disordered regions span residues 29–49 and 202–279; these read PVKQ…NGRV and NASI…KKKG. Residues 36–49 are compositionally biased toward low complexity; the sequence is GKSSSGGRNNNGRV. The segment covering 209 to 220 has biased composition (basic residues); it reads GRSRWLGRRPHN.

The protein belongs to the universal ribosomal protein uL2 family. In terms of assembly, part of the 50S ribosomal subunit. Forms a bridge to the 30S subunit in the 70S ribosome.

One of the primary rRNA binding proteins. Required for association of the 30S and 50S subunits to form the 70S ribosome, for tRNA binding and peptide bond formation. It has been suggested to have peptidyltransferase activity; this is somewhat controversial. Makes several contacts with the 16S rRNA in the 70S ribosome. The protein is Large ribosomal subunit protein uL2 of Beijerinckia indica subsp. indica (strain ATCC 9039 / DSM 1715 / NCIMB 8712).